Reading from the N-terminus, the 202-residue chain is Small ribosomal subunit protein uS4 (202 aa).

The segment at 17–42 (ELPGLSRKTPRRAYPPGQHGQARKKR) is disordered. An S4 RNA-binding domain is found at 90 to 152 (MRLDNTIFRL…DASRKLIETH (63 aa)).

Belongs to the universal ribosomal protein uS4 family. As to quaternary structure, part of the 30S ribosomal subunit. Contacts protein S5. The interaction surface between S4 and S5 is involved in control of translational fidelity.

One of the primary rRNA binding proteins, it binds directly to 16S rRNA where it nucleates assembly of the body of the 30S subunit. Its function is as follows. With S5 and S12 plays an important role in translational accuracy. The chain is Small ribosomal subunit protein uS4 from Acaryochloris marina (strain MBIC 11017).